Consider the following 656-residue polypeptide: Protein O1 homolog (656 aa).

Residues 544-564 (FIKKVILANVIFEYIFTLIII) traverse the membrane as a helical segment.

Belongs to the chordopoxvirinae O1 family.

The protein localises to the membrane. In Vertebrata (FPV), this protein is Protein O1 homolog.